We begin with the raw amino-acid sequence, 318 residues long: tRNA-modifying protein YgfZ (318 aa).

Residues Trp-28 and Trp-182 each coordinate folate.

It belongs to the tRNA-modifying YgfZ family.

It localises to the cytoplasm. Folate-binding protein involved in regulating the level of ATP-DnaA and in the modification of some tRNAs. It is probably a key factor in regulatory networks that act via tRNA modification, such as initiation of chromosomal replication. The protein is tRNA-modifying protein YgfZ of Aliivibrio fischeri (strain ATCC 700601 / ES114) (Vibrio fischeri).